The chain runs to 136 residues: Small ribosomal subunit protein bS6 (136 aa).

Over residues 117–130 the composition is skewed to basic and acidic residues; the sequence is EERSRSSRRQREDV. The interval 117–136 is disordered; it reads EERSRSSRRQREDVIEGVEL.

The protein belongs to the bacterial ribosomal protein bS6 family.

Its function is as follows. Binds together with bS18 to 16S ribosomal RNA. The chain is Small ribosomal subunit protein bS6 from Bartonella quintana (strain Toulouse) (Rochalimaea quintana).